A 460-amino-acid chain; its full sequence is Cell death abnormality protein 8 (460 aa).

Topologically, residues 1–45 (MYLKKHESKLLLIPKNEDKEDAGIIAVLTDRVPSVLIVRWFDLFC) are cytoplasmic. A helical transmembrane segment spans residues 46-66 (FGFAMCSYVLDFFSDIGIAIF). Over 67-77 (HFWAGRHLSGA) the chain is Extracellular. The helical transmembrane segment at 78–98 (LVLTFALIPSVIINIISMVWM) threads the bilayer. Residues 99 to 123 (LDDEMHWKRRAHPRRTGTFELNQKR) lie on the Cytoplasmic side of the membrane. A helical membrane pass occupies residues 124–144 (FISLGKMITLCIFQMGPLFWY). At 145–219 (YKALYYGWMF…YYISGKYPYW (75 aa)) the chain is on the extracellular side. A helical membrane pass occupies residues 220-240 (LYFQAASLTLSIISISWSVVV). Residues 241 to 274 (QNRSLRMTRDDKVNIWPHEAVLQFCWRFLTILAR) are Cytoplasmic-facing. Residues 275–295 (IITLVAFVLLFGIYVVFLIFG) traverse the membrane as a helical segment. Topologically, residues 296–320 (HLIVTLVHVIFLQALHIEACTHIEK) are extracellular. Residues 321 to 341 (LLLLINAMIHLFTPFNMAEGN) traverse the membrane as a helical segment. At 342–353 (TRYRYLVAYTVE) the chain is on the cytoplasmic side. Residues 354–374 (FIEMMIIFLLLPTPLDAFPLI) form a helical membrane-spanning segment. Residues 375-378 (EKIR) are Extracellular-facing. Residues 379–399 (IGVPATFFIGIFIMLIYYKFF) form a helical membrane-spanning segment. The Cytoplasmic portion of the chain corresponds to 400–460 (HPNRRQDLEA…SLLEEDECHN (61 aa)).

Belongs to the XK family. Cleavage by ced-3 activates ced-8 function in promoting phosphatidylserine exposure at the surface of apoptotic cells.

The protein resides in the cell membrane. Acts downstream of ced-9 and caspase ced-3 to promote phosphatidylserine exposure on apoptotic cell surface, possibly by mediating phospholipid scrambling. Phosphatidylserine is a specific marker only present at the surface of apoptotic cells and acts as a specific signal for engulfment. Regulates apoptosis kinetics during embryonic development. Not required for engulfment of germ cell corpses. This is Cell death abnormality protein 8 from Caenorhabditis briggsae.